A 264-amino-acid polypeptide reads, in one-letter code: 3-methyl-2-oxobutanoate hydroxymethyltransferase (264 aa).

D45 and D84 together coordinate Mg(2+). 3-methyl-2-oxobutanoate-binding positions include 45 to 46 (DS), D84, and K113. E115 is a Mg(2+) binding site. Catalysis depends on E182, which acts as the Proton acceptor.

This sequence belongs to the PanB family. As to quaternary structure, homodecamer; pentamer of dimers. Mg(2+) serves as cofactor.

Its subcellular location is the cytoplasm. The catalysed reaction is 3-methyl-2-oxobutanoate + (6R)-5,10-methylene-5,6,7,8-tetrahydrofolate + H2O = 2-dehydropantoate + (6S)-5,6,7,8-tetrahydrofolate. Its pathway is cofactor biosynthesis; (R)-pantothenate biosynthesis; (R)-pantoate from 3-methyl-2-oxobutanoate: step 1/2. In terms of biological role, catalyzes the reversible reaction in which hydroxymethyl group from 5,10-methylenetetrahydrofolate is transferred onto alpha-ketoisovalerate to form ketopantoate. In Nitrosococcus oceani (strain ATCC 19707 / BCRC 17464 / JCM 30415 / NCIMB 11848 / C-107), this protein is 3-methyl-2-oxobutanoate hydroxymethyltransferase.